Reading from the N-terminus, the 658-residue chain is Threonine--tRNA ligase (658 aa).

In terms of domain architecture, TGS spans 1–64 (MSNTVSLQFP…GASGKVEIIT (64 aa)). Positions 246–548 (DHRRLGREMD…LIENFAGHMP (303 aa)) are catalytic. Residues cysteine 343, histidine 394, and histidine 525 each coordinate Zn(2+).

This sequence belongs to the class-II aminoacyl-tRNA synthetase family. In terms of assembly, homodimer. The cofactor is Zn(2+).

It is found in the cytoplasm. The enzyme catalyses tRNA(Thr) + L-threonine + ATP = L-threonyl-tRNA(Thr) + AMP + diphosphate + H(+). Its function is as follows. Catalyzes the attachment of threonine to tRNA(Thr) in a two-step reaction: L-threonine is first activated by ATP to form Thr-AMP and then transferred to the acceptor end of tRNA(Thr). Also edits incorrectly charged L-seryl-tRNA(Thr). This is Threonine--tRNA ligase from Brucella melitensis biotype 1 (strain ATCC 23456 / CCUG 17765 / NCTC 10094 / 16M).